Reading from the N-terminus, the 127-residue chain is Small ribosomal subunit protein bS6 (127 aa).

The interval 104–127 is disordered; the sequence is QGAEKGKSSRKEKVAAEAEASEEA. A compositionally biased stretch (basic and acidic residues) spans 107-119; it reads EKGKSSRKEKVAA.

Belongs to the bacterial ribosomal protein bS6 family.

Functionally, binds together with bS18 to 16S ribosomal RNA. This Coxiella burnetii (strain CbuG_Q212) (Coxiella burnetii (strain Q212)) protein is Small ribosomal subunit protein bS6.